We begin with the raw amino-acid sequence, 55 residues long: Large ribosomal subunit protein bL33 (55 aa).

The protein belongs to the bacterial ribosomal protein bL33 family.

This chain is Large ribosomal subunit protein bL33, found in Orientia tsutsugamushi (strain Boryong) (Rickettsia tsutsugamushi).